The primary structure comprises 443 residues: Structure-specific endonuclease subunit SLX1 (443 aa).

Residues Arg-13 to Arg-93 form the GIY-YIG domain. The disordered stretch occupies residues Phe-121 to Asn-140. An SLX1-type zinc finger spans residues Cys-361–Cys-419.

The protein belongs to the SLX1 family. Forms a heterodimer with SLX4. A divalent metal cation serves as cofactor.

The protein resides in the nucleus. Catalytic subunit of the SLX1-SLX4 structure-specific endonuclease that resolves DNA secondary structures generated during DNA repair and recombination. Has endonuclease activity towards branched DNA substrates, introducing single-strand cuts in duplex DNA close to junctions with ss-DNA. The polypeptide is Structure-specific endonuclease subunit SLX1 (Malassezia globosa (strain ATCC MYA-4612 / CBS 7966) (Dandruff-associated fungus)).